A 91-amino-acid chain; its full sequence is Acylphosphatase (91 aa).

The 87-residue stretch at 5–91 folds into the Acylphosphatase-like domain; sequence RAHVFVSGRV…EGVDGFEVRW (87 aa). Catalysis depends on residues Arg-20 and Asn-38.

Belongs to the acylphosphatase family.

It carries out the reaction an acyl phosphate + H2O = a carboxylate + phosphate + H(+). The sequence is that of Acylphosphatase (acyP) from Haloarcula marismortui (strain ATCC 43049 / DSM 3752 / JCM 8966 / VKM B-1809) (Halobacterium marismortui).